A 364-amino-acid polypeptide reads, in one-letter code: tRNA 2-selenouridine synthase (364 aa).

In terms of domain architecture, Rhodanese spans 14–137 (LIADTPIIDV…LRQTTIQATI (124 aa)). Catalysis depends on Cys97, which acts as the S-selanylcysteine intermediate.

Belongs to the SelU family. In terms of assembly, monomer.

The enzyme catalyses 5-methylaminomethyl-2-thiouridine(34) in tRNA + selenophosphate + (2E)-geranyl diphosphate + H2O + H(+) = 5-methylaminomethyl-2-selenouridine(34) in tRNA + (2E)-thiogeraniol + phosphate + diphosphate. It carries out the reaction 5-methylaminomethyl-2-thiouridine(34) in tRNA + (2E)-geranyl diphosphate = 5-methylaminomethyl-S-(2E)-geranyl-thiouridine(34) in tRNA + diphosphate. It catalyses the reaction 5-methylaminomethyl-S-(2E)-geranyl-thiouridine(34) in tRNA + selenophosphate + H(+) = 5-methylaminomethyl-2-(Se-phospho)selenouridine(34) in tRNA + (2E)-thiogeraniol. The catalysed reaction is 5-methylaminomethyl-2-(Se-phospho)selenouridine(34) in tRNA + H2O = 5-methylaminomethyl-2-selenouridine(34) in tRNA + phosphate. Its function is as follows. Involved in the post-transcriptional modification of the uridine at the wobble position (U34) of tRNA(Lys), tRNA(Glu) and tRNA(Gln). Catalyzes the conversion of 2-thiouridine (S2U-RNA) to 2-selenouridine (Se2U-RNA). Acts in a two-step process involving geranylation of 2-thiouridine (S2U) to S-geranyl-2-thiouridine (geS2U) and subsequent selenation of the latter derivative to 2-selenouridine (Se2U) in the tRNA chain. This is tRNA 2-selenouridine synthase from Escherichia coli (strain 55989 / EAEC).